Consider the following 720-residue polypeptide: Methionine--tRNA ligase (720 aa).

A 'HIGH' region motif is present at residues 27 to 37 (PYANGQIHIGH). The Zn(2+) site is built by C158, C161, C171, and C174. The 'KMSKS' region signature appears at 348–352 (KMSKS). K351 serves as a coordination point for ATP. Residues 614 to 720 (DFAKIDLRIA…SGAKPGMRVK (107 aa)) form the tRNA-binding domain.

The protein belongs to the class-I aminoacyl-tRNA synthetase family. MetG type 1 subfamily. Homodimer. It depends on Zn(2+) as a cofactor.

The protein localises to the cytoplasm. The enzyme catalyses tRNA(Met) + L-methionine + ATP = L-methionyl-tRNA(Met) + AMP + diphosphate. Is required not only for elongation of protein synthesis but also for the initiation of all mRNA translation through initiator tRNA(fMet) aminoacylation. This chain is Methionine--tRNA ligase, found in Burkholderia lata (strain ATCC 17760 / DSM 23089 / LMG 22485 / NCIMB 9086 / R18194 / 383).